Consider the following 353-residue polypeptide: Uroporphyrinogen decarboxylase (353 aa).

Substrate contacts are provided by residues R29 to R33, D79, Y156, T211, and H329.

This sequence belongs to the uroporphyrinogen decarboxylase family. Homodimer.

The protein localises to the cytoplasm. The catalysed reaction is uroporphyrinogen III + 4 H(+) = coproporphyrinogen III + 4 CO2. It functions in the pathway porphyrin-containing compound metabolism; protoporphyrin-IX biosynthesis; coproporphyrinogen-III from 5-aminolevulinate: step 4/4. In terms of biological role, catalyzes the decarboxylation of four acetate groups of uroporphyrinogen-III to yield coproporphyrinogen-III. This chain is Uroporphyrinogen decarboxylase, found in Alcanivorax borkumensis (strain ATCC 700651 / DSM 11573 / NCIMB 13689 / SK2).